Consider the following 248-residue polypeptide: MTNLLNNWLIINQFGYDLPEPWQLGLQDAAHPVMEEIIFFHDQVMFILIIIITTVLWLIVKALSGKAYHRYLVDGTLLEIIWTIVPAIILILIAFPSLKLLYLMDEVMDPALTIKAIGHQWYWSYEYSDYQTETLEFDSYMVPTSELNKGDFRLLEVDNRLVVPINTHVRVLVTGADVLHSFAVPALAVKMDAIPGRLNQTGFFIKRPGIFYGQCSEICGANHSFMPIVIEAVSLDKYINWVLSGSDE.

The Mitochondrial intermembrane segment spans residues Met-1 to Gln-43. Residues Val-44–Gly-65 traverse the membrane as a helical segment. The Mitochondrial matrix segment spans residues Lys-66–Glu-79. Residues Ile-80–Lys-99 form a helical membrane-spanning segment. At Leu-100 to Glu-248 the chain is on the mitochondrial intermembrane side. Positions 180, 215, 217, 219, 223, and 226 each coordinate Cu cation. Glu-217 contacts Mg(2+).

The protein belongs to the cytochrome c oxidase subunit 2 family. In terms of assembly, component of the cytochrome c oxidase (complex IV, CIV), a multisubunit enzyme composed of a catalytic core of 3 subunits and several supernumerary subunits. The complex exists as a monomer or a dimer and forms supercomplexes (SCs) in the inner mitochondrial membrane with ubiquinol-cytochrome c oxidoreductase (cytochrome b-c1 complex, complex III, CIII). Cu cation is required as a cofactor.

It is found in the mitochondrion inner membrane. The enzyme catalyses 4 Fe(II)-[cytochrome c] + O2 + 8 H(+)(in) = 4 Fe(III)-[cytochrome c] + 2 H2O + 4 H(+)(out). Its function is as follows. Component of the cytochrome c oxidase, the last enzyme in the mitochondrial electron transport chain which drives oxidative phosphorylation. The respiratory chain contains 3 multisubunit complexes succinate dehydrogenase (complex II, CII), ubiquinol-cytochrome c oxidoreductase (cytochrome b-c1 complex, complex III, CIII) and cytochrome c oxidase (complex IV, CIV), that cooperate to transfer electrons derived from NADH and succinate to molecular oxygen, creating an electrochemical gradient over the inner membrane that drives transmembrane transport and the ATP synthase. Cytochrome c oxidase is the component of the respiratory chain that catalyzes the reduction of oxygen to water. Electrons originating from reduced cytochrome c in the intermembrane space (IMS) are transferred via the dinuclear copper A center (CU(A)) of subunit 2 and heme A of subunit 1 to the active site in subunit 1, a binuclear center (BNC) formed by heme A3 and copper B (CU(B)). The BNC reduces molecular oxygen to 2 water molecules using 4 electrons from cytochrome c in the IMS and 4 protons from the mitochondrial matrix. The chain is Cytochrome c oxidase subunit 2 (COII) from Metridium senile (Brown sea anemone).